A 529-amino-acid chain; its full sequence is Bifunctional purine biosynthesis protein PurH (529 aa).

An MGS-like domain is found at 1–148 (MQQHRPVRRA…KNHKDVAIVV (148 aa)).

The protein belongs to the PurH family.

It carries out the reaction (6R)-10-formyltetrahydrofolate + 5-amino-1-(5-phospho-beta-D-ribosyl)imidazole-4-carboxamide = 5-formamido-1-(5-phospho-D-ribosyl)imidazole-4-carboxamide + (6S)-5,6,7,8-tetrahydrofolate. The catalysed reaction is IMP + H2O = 5-formamido-1-(5-phospho-D-ribosyl)imidazole-4-carboxamide. It functions in the pathway purine metabolism; IMP biosynthesis via de novo pathway; 5-formamido-1-(5-phospho-D-ribosyl)imidazole-4-carboxamide from 5-amino-1-(5-phospho-D-ribosyl)imidazole-4-carboxamide (10-formyl THF route): step 1/1. The protein operates within purine metabolism; IMP biosynthesis via de novo pathway; IMP from 5-formamido-1-(5-phospho-D-ribosyl)imidazole-4-carboxamide: step 1/1. This is Bifunctional purine biosynthesis protein PurH from Erwinia tasmaniensis (strain DSM 17950 / CFBP 7177 / CIP 109463 / NCPPB 4357 / Et1/99).